We begin with the raw amino-acid sequence, 791 residues long: Protein CLASP-2 (791 aa).

Low complexity-rich tracts occupy residues 259–271 (ASDA…SVNS), 323–334 (RTPNTRPMTTRT), and 372–381 (SQPGSRNGSP). 3 disordered regions span residues 259 to 283 (ASDA…SKLS), 315 to 391 (TRMT…TGTL), and 422 to 454 (AMNT…PQKS). Positions 422–434 (AMNTAKESLGQPS) are enriched in polar residues.

The protein belongs to the CLASP family. As to quaternary structure, interacts with hcp-1 and hcp-2.

The protein resides in the cytoplasm. Its subcellular location is the cytoskeleton. It localises to the microtubule organizing center. It is found in the centrosome. The protein localises to the chromosome. The protein resides in the centromere. Its subcellular location is the kinetochore. It localises to the spindle. Probable microtubule plus-end tracking protein that promotes the stabilization of dynamic microtubules. Required for the formation of mitotic and meiotic spindles. Specifically promotes the polymerization of kinetochore-bound microtubules. Also required for cytoplasmic streaming. This is Protein CLASP-2 (cls-2) from Caenorhabditis briggsae.